A 382-amino-acid polypeptide reads, in one-letter code: Albumin (382 aa).

2 Albumin domains span residues 1–178 and 179–377; these read KCRI…ILLE and AALK…GLLQ. 12 disulfides stabilise this stretch: Cys2-Cys48, Cys47-Cys55, Cys67-Cys81, Cys80-Cys91, Cys116-Cys161, Cys160-Cys169, Cys192-Cys238, Cys237-Cys248, Cys261-Cys277, Cys276-Cys287, Cys314-Cys359, and Cys358-Cys367. Asp51 and Glu54 together coordinate Ca(2+). Asp51 contacts Zn(2+).

The protein belongs to the ALB/AFP/VDB family. As to expression, plasma.

It is found in the secreted. Functionally, serum albumin, the main protein of plasma, has a good binding capacity for water, Ca(2+), Na(+), K(+), fatty acids, hormones, bilirubin and drugs. Its main function is the regulation of the colloidal osmotic pressure of blood. The sequence is that of Albumin (ALB) from Aquarana catesbeiana (American bullfrog).